The sequence spans 444 residues: tRNA-2-methylthio-N(6)-dimethylallyladenosine synthase (444 aa).

The 115-residue stretch at 8–122 (KTFYIETFGC…LAEMLVQIES (115 aa)) folds into the MTTase N-terminal domain. [4Fe-4S] cluster-binding residues include Cys17, Cys53, Cys85, Cys160, Cys164, and Cys167. Residues 146–376 (RGNAHRGYIT…MEHQREIQRA (231 aa)) form the Radical SAM core domain. The region spanning 379–444 (RKHIGETIEV…PNSLVGELVG (66 aa)) is the TRAM domain.

It belongs to the methylthiotransferase family. MiaB subfamily. Monomer. The cofactor is [4Fe-4S] cluster.

It is found in the cytoplasm. It carries out the reaction N(6)-dimethylallyladenosine(37) in tRNA + (sulfur carrier)-SH + AH2 + 2 S-adenosyl-L-methionine = 2-methylsulfanyl-N(6)-dimethylallyladenosine(37) in tRNA + (sulfur carrier)-H + 5'-deoxyadenosine + L-methionine + A + S-adenosyl-L-homocysteine + 2 H(+). Functionally, catalyzes the methylthiolation of N6-(dimethylallyl)adenosine (i(6)A), leading to the formation of 2-methylthio-N6-(dimethylallyl)adenosine (ms(2)i(6)A) at position 37 in tRNAs that read codons beginning with uridine. In Koribacter versatilis (strain Ellin345), this protein is tRNA-2-methylthio-N(6)-dimethylallyladenosine synthase.